Reading from the N-terminus, the 807-residue chain is Glycerol-3-phosphate acyltransferase (807 aa).

Residues 305–310 (CHRSHM) carry the HXXXXD motif motif.

This sequence belongs to the GPAT/DAPAT family.

It is found in the cell inner membrane. The catalysed reaction is sn-glycerol 3-phosphate + an acyl-CoA = a 1-acyl-sn-glycero-3-phosphate + CoA. Its pathway is phospholipid metabolism; CDP-diacylglycerol biosynthesis; CDP-diacylglycerol from sn-glycerol 3-phosphate: step 1/3. This Shigella boydii serotype 18 (strain CDC 3083-94 / BS512) protein is Glycerol-3-phosphate acyltransferase.